We begin with the raw amino-acid sequence, 180 residues long: Large ribosomal subunit protein uL5 (180 aa).

Belongs to the universal ribosomal protein uL5 family. Part of the 50S ribosomal subunit; part of the 5S rRNA/L5/L18/L25 subcomplex. Contacts the 5S rRNA and the P site tRNA. Forms a bridge to the 30S subunit in the 70S ribosome.

This is one of the proteins that bind and probably mediate the attachment of the 5S RNA into the large ribosomal subunit, where it forms part of the central protuberance. In the 70S ribosome it contacts protein S13 of the 30S subunit (bridge B1b), connecting the 2 subunits; this bridge is implicated in subunit movement. Contacts the P site tRNA; the 5S rRNA and some of its associated proteins might help stabilize positioning of ribosome-bound tRNAs. The protein is Large ribosomal subunit protein uL5 of Clostridium botulinum (strain ATCC 19397 / Type A).